We begin with the raw amino-acid sequence, 302 residues long: 1D-myo-inositol 2-acetamido-2-deoxy-alpha-D-glucopyranoside deacetylase (302 aa).

Residues His12, Asp15, and His147 each contribute to the Zn(2+) site.

The protein belongs to the MshB deacetylase family. Requires Zn(2+) as cofactor.

The catalysed reaction is 1D-myo-inositol 2-acetamido-2-deoxy-alpha-D-glucopyranoside + H2O = 1D-myo-inositol 2-amino-2-deoxy-alpha-D-glucopyranoside + acetate. Catalyzes the deacetylation of 1D-myo-inositol 2-acetamido-2-deoxy-alpha-D-glucopyranoside (GlcNAc-Ins) in the mycothiol biosynthesis pathway. The polypeptide is 1D-myo-inositol 2-acetamido-2-deoxy-alpha-D-glucopyranoside deacetylase (Thermobispora bispora (strain ATCC 19993 / DSM 43833 / CBS 139.67 / JCM 10125 / KCTC 9307 / NBRC 14880 / R51)).